Here is a 204-residue protein sequence, read N- to C-terminus: Cysteine-rich protein 3 (204 aa).

An LIM zinc-binding 1 domain is found at Trp3–Pro64. The interval Ile88–Ala107 is disordered. One can recognise an LIM zinc-binding 2 domain in the interval Ser122–Pro183.

As to expression, expressed specifically by the thymus.

Its subcellular location is the cytoplasm. The polypeptide is Cysteine-rich protein 3 (Crip3) (Mus musculus (Mouse)).